The following is a 1383-amino-acid chain: DNA-directed RNA polymerase subunit beta (1383 aa).

This sequence belongs to the RNA polymerase beta chain family. The RNAP catalytic core consists of 2 alpha, 1 beta, 1 beta' and 1 omega subunit. When a sigma factor is associated with the core the holoenzyme is formed, which can initiate transcription.

The catalysed reaction is RNA(n) + a ribonucleoside 5'-triphosphate = RNA(n+1) + diphosphate. Functionally, DNA-dependent RNA polymerase catalyzes the transcription of DNA into RNA using the four ribonucleoside triphosphates as substrates. The sequence is that of DNA-directed RNA polymerase subunit beta from Xanthomonas axonopodis pv. citri (strain 306).